The chain runs to 449 residues: UDP-N-acetylmuramate--L-alanine ligase (449 aa).

121–127 (GAHGKSS) serves as a coordination point for ATP.

This sequence belongs to the MurCDEF family.

It is found in the cytoplasm. It catalyses the reaction UDP-N-acetyl-alpha-D-muramate + L-alanine + ATP = UDP-N-acetyl-alpha-D-muramoyl-L-alanine + ADP + phosphate + H(+). It functions in the pathway cell wall biogenesis; peptidoglycan biosynthesis. In terms of biological role, cell wall formation. This chain is UDP-N-acetylmuramate--L-alanine ligase, found in Helicobacter pylori (strain HPAG1).